Consider the following 777-residue polypeptide: Zygote defective protein 12 (777 aa).

Basic and acidic residues-rich tracts occupy residues M1–E10 and K18–E36. The interval M1–E36 is disordered. An interaction with dli-1 region spans residues M1–G234. The Calponin-homology (CH) domain maps to Q44–A169. Disordered stretches follow at residues Q217–A242 and S273–I292. Over residues S218–S235 the composition is skewed to low complexity. 2 coiled-coil regions span residues S236 to K399 and N425 to R688. Positions S273 to G288 are enriched in polar residues. The chain crosses the membrane as a helical span at residues A747–I767. The interval A749–A777 is interaction with unc-84.

This sequence belongs to the hook family. In terms of assembly, homodimer. Interacts with the dynein subunit dli-1 via its N-terminus. May interact with microtubules. Interacts with sut-2. Interacts (via C-terminus) with unc-84 (via C-terminus); the interaction is direct. In terms of tissue distribution, expressed in the syncytial gonad, oocytes, and in all cells during the development of the early embryo.

The protein resides in the nucleus membrane. It is found in the cytoplasm. It localises to the cytoskeleton. Its subcellular location is the microtubule organizing center. The protein localises to the centrosome. In terms of biological role, cytoskeletal linker protein, which is essential for attachment of the centrosome to the nucleus. Required for dynein localization to the nuclear envelope. Forms a LINC (LInker of Nucleoskeleton and Cytoskeleton) complex together with unc-84, that may be involved in DNA damage repair. The polypeptide is Zygote defective protein 12 (Caenorhabditis elegans).